Here is a 172-residue protein sequence, read N- to C-terminus: Macro domain-containing protein CT2219 (172 aa).

The Macro domain maps to 1-172 (MPDNVLIHAI…DVYQKALAAG (172 aa)).

This sequence belongs to the MacroD-type family.

The protein is Macro domain-containing protein CT2219 of Chlorobaculum tepidum (strain ATCC 49652 / DSM 12025 / NBRC 103806 / TLS) (Chlorobium tepidum).